A 970-amino-acid chain; its full sequence is MDDDQQFCLRWNNHQSTLISVFDTLLENETLVDCTLAAEGKFLKAHKVVLSACSPYFATLLQEQYDKHPIFILKDVKYQELRAMMDYMYRGEVNISQDQLAALLKAAESLQIKGLSDNRTGGGVAPKPESSGHHRGGKLSGAYTLEQTKRARLATGGAMDTSGDVSGSREGSSSPSRRRRKVRRRSMENDAHDNSNSSVLQAAASNQSILQQTGAGLAVSALVTTQLSSGPAAGTSSQASSTQQQQPLTSTNVTKKTESAKLTSSTAAPASGASASAAVQQAHLHQQQAQTTSDAINTENVQAQSQGGAQGVQGDDEDIDEGSAVGGPNSATGPNPASASASAVHAGVVVKQLASVVDKSSSNHKHKIKDNSVSSVGSEMVIEPKAEYDDDAHDENVEDLTLDEEDMTMEELDQTAGTSQGGEGSSQTYATWQHDRSQDELGLMAQDAQQRDPQASKQDKGEQTEGAQDEFELDDCLLESNDIVITQNKDGFVLHVKKLGNITAAKLEENQAVAQQQGQAAVTVTGPAGQPTPTITELLNAAAASHSEPKPTLTTLTSTPIKLPSSECELINIKKIIPATTTIATHHPHTSSTIIHPHHIIQHVSQEPHHQEHHQQHQTIHIEEVPQTSQQHHQQQHHHQLQTVQPTHTQVQSIITAHPGQTINLVGLRNVQLADSKPIASRIRYSRGKIIGPTVQNLQIVETHEPIQHQHHELSDGTKYEISEIDLNNPNASAAIISDLVKYAEIDDIELPDGTKIGIGFAPSEITEHMQTSGGETHITTIEHEPQELQTVHQHEQTQQTHHIHAGQLQTHHIQTVVQSSSGQQQHDQQQHHQHHSIELQDDDGVETITPEELGMHDSSKSYTILTTRPMKEESEHDPSGMTYELSLSDSSLGPCDDPESRYVCRHCGKKYRWKSTLRRHENVECGGKEPCHPCPYCSYKAKQRGNLGVHVRKHHPEKPQLESKRGRKV.

A BTB domain is found at 32-97; the sequence is VDCTLAAEGK…MYRGEVNISQ (66 aa). Disordered regions lie at residues 115 to 200, 228 to 340, 447 to 468, and 790 to 843; these read LSDN…SSVL, SSGP…ASAS, DAQQ…EGAQ, and QTVH…LQDD. Low complexity-rich tracts occupy residues 162–175, 228–251, 263–293, and 329–340; these read SGDV…SSSP, SSGP…LTST, TSST…QTTS, and NSATGPNPASAS. 2 stretches are compositionally biased toward polar residues: residues 447-456 and 808-818; these read DAQQRDPQAS and QLQTHHIQTVV. A compositionally biased stretch (low complexity) spans 819–828; sequence QSSSGQQQHD. The C2H2-type 1; degenerate zinc finger occupies 903–925; sequence YVCRHCGKKYRWKSTLRRHENVE. The C2H2-type 2 zinc finger occupies 933 to 955; it reads HPCPYCSYKAKQRGNLGVHVRKH.

By stage 11, isoform F is expressed throughout the mesoderm whereas isoform T, and at low levels isoform I, is expressed throughout the ectoderm. Isoform K is expressed in both mesoderm and ectoderm. Expression becomes restricted during later stages; starting from stage 14 to 15, isoform F is expressed in the gut. Isoform I is expressed in the CNS. Isoform I and isoform F show expression in the epithelium starting at stage 14, though for isoform I the CNS expression remains predominant. Expression is also seen in specific types of cells in the embryo; isoform K is expressed in the ventral furrow at stage 5 and in a dynamic pattern in the ventral neurogenic region starting at stage 7. Isoform T is expressed around the tracheal pits at stage 11. Isoform F shows transient enrichment in a dorsal cell layer in the CNS at stages 13 and 14.

It localises to the nucleus. Functionally, putative transcription factor required for axon growth and guidance in the central and peripheral nervous systems. Repels CNS axons away from the midline by promoting the expression of the midline repellent sli and its receptor robo. The chain is Longitudinals lacking protein, isoforms F/I/K/T from Drosophila melanogaster (Fruit fly).